The following is a 414-amino-acid chain: Probable sugar phosphate/phosphate translocator At1g06470 (414 aa).

9 consecutive transmembrane segments (helical) span residues Val72 to Tyr92, Leu101 to Leu121, Thr172 to Phe192, Pro197 to Ala217, Phe224 to Thr244, Phe259 to Leu279, Phe303 to Val323, Ala328 to Phe348, and Phe354 to Trp374. In terms of domain architecture, EamA spans Ala106 to Val216.

Belongs to the TPT transporter family. TPT (TC 2.A.7.9) subfamily.

The protein resides in the membrane. This chain is Probable sugar phosphate/phosphate translocator At1g06470, found in Arabidopsis thaliana (Mouse-ear cress).